The sequence spans 462 residues: Cytochrome P450 20A1 (462 aa).

A helical transmembrane segment spans residues 4-24 (FAIFAVTFLLALVGAVLYLYP). Cys409 is a binding site for heme.

The protein belongs to the cytochrome P450 family. It depends on heme as a cofactor.

The protein localises to the membrane. This chain is Cytochrome P450 20A1 (Cyp20a1), found in Mus musculus (Mouse).